The primary structure comprises 268 residues: tRNA pseudouridine synthase A (268 aa).

The Nucleophile role is filled by Asp-52. Residue Tyr-110 coordinates substrate.

The protein belongs to the tRNA pseudouridine synthase TruA family. Homodimer.

It carries out the reaction uridine(38/39/40) in tRNA = pseudouridine(38/39/40) in tRNA. In terms of biological role, formation of pseudouridine at positions 38, 39 and 40 in the anticodon stem and loop of transfer RNAs. This chain is tRNA pseudouridine synthase A, found in Prochlorococcus marinus (strain MIT 9312).